A 400-amino-acid polypeptide reads, in one-letter code: NADH-quinone oxidoreductase subunit D (400 aa).

Belongs to the complex I 49 kDa subunit family. NDH-1 is composed of 14 different subunits. Subunits NuoB, C, D, E, F, and G constitute the peripheral sector of the complex.

It is found in the cell inner membrane. The enzyme catalyses a quinone + NADH + 5 H(+)(in) = a quinol + NAD(+) + 4 H(+)(out). Its function is as follows. NDH-1 shuttles electrons from NADH, via FMN and iron-sulfur (Fe-S) centers, to quinones in the respiratory chain. The immediate electron acceptor for the enzyme in this species is believed to be a menaquinone. Couples the redox reaction to proton translocation (for every two electrons transferred, four hydrogen ions are translocated across the cytoplasmic membrane), and thus conserves the redox energy in a proton gradient. The polypeptide is NADH-quinone oxidoreductase subunit D (Chlorobaculum parvum (strain DSM 263 / NCIMB 8327) (Chlorobium vibrioforme subsp. thiosulfatophilum)).